The chain runs to 164 residues: Phosphopantetheine adenylyltransferase (164 aa).

Residue S10 coordinates substrate. Residues 10-11 and H18 each bind ATP; that span reads SF. Substrate-binding residues include K42, L74, and R88. ATP-binding positions include 89–91, E99, and 124–130; these read GLR and YSFLSSS.

This sequence belongs to the bacterial CoaD family. In terms of assembly, homohexamer. Requires Mg(2+) as cofactor.

The protein resides in the cytoplasm. It carries out the reaction (R)-4'-phosphopantetheine + ATP + H(+) = 3'-dephospho-CoA + diphosphate. It functions in the pathway cofactor biosynthesis; coenzyme A biosynthesis; CoA from (R)-pantothenate: step 4/5. Reversibly transfers an adenylyl group from ATP to 4'-phosphopantetheine, yielding dephospho-CoA (dPCoA) and pyrophosphate. This chain is Phosphopantetheine adenylyltransferase, found in Bacillus licheniformis (strain ATCC 14580 / DSM 13 / JCM 2505 / CCUG 7422 / NBRC 12200 / NCIMB 9375 / NCTC 10341 / NRRL NRS-1264 / Gibson 46).